The sequence spans 130 residues: UPF0251 protein MmarC7_1642 (130 aa).

It belongs to the UPF0251 family.

The sequence is that of UPF0251 protein MmarC7_1642 from Methanococcus maripaludis (strain C7 / ATCC BAA-1331).